Here is an 886-residue protein sequence, read N- to C-terminus: Alanine--tRNA ligase (886 aa).

Zn(2+)-binding residues include H564, H568, C666, and H670.

It belongs to the class-II aminoacyl-tRNA synthetase family. It depends on Zn(2+) as a cofactor.

It is found in the cytoplasm. The catalysed reaction is tRNA(Ala) + L-alanine + ATP = L-alanyl-tRNA(Ala) + AMP + diphosphate. Its function is as follows. Catalyzes the attachment of alanine to tRNA(Ala) in a two-step reaction: alanine is first activated by ATP to form Ala-AMP and then transferred to the acceptor end of tRNA(Ala). Also edits incorrectly charged Ser-tRNA(Ala) and Gly-tRNA(Ala) via its editing domain. This chain is Alanine--tRNA ligase, found in Prochlorococcus marinus (strain MIT 9515).